The chain runs to 164 residues: Ecotin (164 aa).

An N-terminal signal peptide occupies residues 1 to 20; the sequence is MKMFVPAVVFAALASASAWA. Residues cysteine 72 and cysteine 109 are joined by a disulfide bond.

Belongs to the protease inhibitor I11 (ecotin) family. As to quaternary structure, homodimer.

The protein localises to the periplasm. In terms of biological role, general inhibitor of pancreatic serine proteases: inhibits chymotrypsin, trypsin, elastases, factor X, kallikrein as well as a variety of other proteases. This chain is Ecotin, found in Salmonella enteritidis PT4 (strain P125109).